The sequence spans 72 residues: Translation initiation factor IF-1 1 (72 aa).

Residues 1–72 enclose the S1-like domain; the sequence is MAKDDVIQMQ…SRARIVFRAK (72 aa).

It belongs to the IF-1 family. Component of the 30S ribosomal translation pre-initiation complex which assembles on the 30S ribosome in the order IF-2 and IF-3, IF-1 and N-formylmethionyl-tRNA(fMet); mRNA recruitment can occur at any time during PIC assembly.

The protein localises to the cytoplasm. One of the essential components for the initiation of protein synthesis. Stabilizes the binding of IF-2 and IF-3 on the 30S subunit to which N-formylmethionyl-tRNA(fMet) subsequently binds. Helps modulate mRNA selection, yielding the 30S pre-initiation complex (PIC). Upon addition of the 50S ribosomal subunit IF-1, IF-2 and IF-3 are released leaving the mature 70S translation initiation complex. This is Translation initiation factor IF-1 1 from Ralstonia nicotianae (strain ATCC BAA-1114 / GMI1000) (Ralstonia solanacearum).